The following is a 396-amino-acid chain: Na(+)/H(+) antiporter NhaA 1 (396 aa).

12 helical membrane-spanning segments follow: residues 9-29 (LHNE…AMLI), 59-79 (LLLW…GLEL), 95-115 (VLPV…YVMF), 125-145 (GWAV…ALLG), 154-174 (LFLL…IAIF), 177-197 (SDLS…LFLL), 200-220 (IGVK…VAVL), 223-243 (GVHA…KGET), 260-280 (VVGL…SLAG), 281-301 (LGLN…LLLG), 332-352 (GVAL…SLAF), and 373-393 (ILSG…FSLA).

It belongs to the NhaA Na(+)/H(+) (TC 2.A.33) antiporter family.

The protein resides in the cell inner membrane. It carries out the reaction Na(+)(in) + 2 H(+)(out) = Na(+)(out) + 2 H(+)(in). In terms of biological role, na(+)/H(+) antiporter that extrudes sodium in exchange for external protons. The chain is Na(+)/H(+) antiporter NhaA 1 from Magnetococcus marinus (strain ATCC BAA-1437 / JCM 17883 / MC-1).